Consider the following 93-residue polypeptide: Small ribosomal subunit protein uS19 (93 aa).

The protein belongs to the universal ribosomal protein uS19 family.

In terms of biological role, protein S19 forms a complex with S13 that binds strongly to the 16S ribosomal RNA. The polypeptide is Small ribosomal subunit protein uS19 (Acidothermus cellulolyticus (strain ATCC 43068 / DSM 8971 / 11B)).